The chain runs to 1122 residues: Desmoglein-2 (1122 aa).

Residues 1–28 (MARSPGDRCALLLLVQLLAVVCLDFGNG) form the signal peptide. Residues 29 to 54 (LHLEVFSPRNEGKPFPKHTHLVRQKR) constitute a propeptide that is removed on maturation. Cadherin domains follow at residues 55-164 (AWIT…EPVF), 165-277 (TQEV…IPVV), 278-398 (ENKM…SSVV), and 397-504 (VVSF…CPVL). Residues 55 to 618 (AWITAPVALR…YDNYVGLGPA (564 aa)) are Extracellular-facing. An N-linked (GlcNAc...) asparagine glycan is attached at Asn117. N-linked (GlcNAc...) asparagine glycosylation is found at Asn314, Asn467, and Asn519. The chain crosses the membrane as a helical span at residues 619–639 (AIALMILALLLLLLVPLLLLI). The Cytoplasmic portion of the chain corresponds to 640 to 1122 (CHCGGGAKGF…KHSTMQHSYS (483 aa)). Residues Ser685, Ser706, Ser709, and Ser729 each carry the phosphoserine modification. The residue at position 808 (Thr808) is a Phosphothreonine. 3 positions are modified to phosphoserine: Ser810, Ser814, and Ser819. Desmoglein repeat repeat units lie at residues 885–916 (AYSS…ESSV), 917–945 (SSRQ…SYAK), 946–971 (GSAV…ERVY), 972–995 (APTS…ERVI), 996–1024 (QPNG…ERES), and 1025–1055 (ILAP…ERIL). The disordered stretch occupies residues 913–932 (ESSVSSRQSQKVVPPPDPVA). The segment covering 914–924 (SSVSSRQSQKV) has biased composition (low complexity). Residues 1089 to 1122 (LPNLDLEESDRPNSTITTSSTRVTKHSTMQHSYS) form a disordered region. Residues 1100–1122 (PNSTITTSSTRVTKHSTMQHSYS) are compositionally biased toward polar residues. The residue at position 1122 (Ser1122) is a Phosphoserine.

In terms of assembly, interacts with PKP2. Interacts with CTNNB1; the interaction promotes localization of CTNNB1 at cell junctions thus reducing its nuclear localization and subsequent transcription of CTNNB1/TCF-target genes. Palmitoylated by ZDHHC5 at the plasma membrane. In terms of tissue distribution, expressed in undifferentiated pluripotent stem cells, expression decreases during differentiation (at protein level). Expressed by embryonic stem cells, expression is reduced during differentiation (at protein level). Expressed at the apical-lateral cell membrane of kidney tubular epithelial cells (at protein level). Expressed in epidermis and heart (at protein level). Expressed in the brain, spleen, lung, liver skeletal muscle, kidney and testis.

The protein resides in the cell membrane. The protein localises to the cell junction. Its subcellular location is the desmosome. It localises to the cytoplasm. A component of desmosome cell-cell junctions which are required for positive regulation of cellular adhesion. Involved in the interaction of plaque proteins and intermediate filaments mediating cell-cell adhesion. Required for proliferation and viability of embryonic stem cells in the blastocyst, thereby crucial for progression of post-implantation embryonic development. Maintains pluripotency by regulating epithelial to mesenchymal transition/mesenchymal to epithelial transition (EMT/MET) via interacting with and sequestering CTNNB1 to sites of cell-cell contact, thereby reducing translocation of CTNNB1 to the nucleus and subsequent transcription of CTNNB1/TCF-target genes. Promotes pluripotency and the multi-lineage differentiation potential of hematopoietic stem cells. Plays a role in endothelial cell sprouting and elongation via mediating the junctional-association of cortical actin fibers and CDH5. Plays a role in limiting inflammatory infiltration and the apoptotic response to injury in kidney tubular epithelial cells, potentially via its role in maintaining cell-cell adhesion and the epithelial barrier. In Mus musculus (Mouse), this protein is Desmoglein-2 (Dsg2).